The following is a 345-amino-acid chain: Phosphoribosylformylglycinamidine cyclo-ligase (345 aa).

This sequence belongs to the AIR synthase family.

It is found in the cytoplasm. It catalyses the reaction 2-formamido-N(1)-(5-O-phospho-beta-D-ribosyl)acetamidine + ATP = 5-amino-1-(5-phospho-beta-D-ribosyl)imidazole + ADP + phosphate + H(+). It functions in the pathway purine metabolism; IMP biosynthesis via de novo pathway; 5-amino-1-(5-phospho-D-ribosyl)imidazole from N(2)-formyl-N(1)-(5-phospho-D-ribosyl)glycinamide: step 2/2. The sequence is that of Phosphoribosylformylglycinamidine cyclo-ligase from Synechococcus sp. (strain CC9605).